The primary structure comprises 118 residues: Small ribosomal subunit protein uS13 (118 aa).

The segment at 94–118 (GLPVRGQRTKTNARTRKGPRKPIKK) is disordered.

It belongs to the universal ribosomal protein uS13 family. As to quaternary structure, part of the 30S ribosomal subunit. Forms a loose heterodimer with protein S19. Forms two bridges to the 50S subunit in the 70S ribosome.

Functionally, located at the top of the head of the 30S subunit, it contacts several helices of the 16S rRNA. In the 70S ribosome it contacts the 23S rRNA (bridge B1a) and protein L5 of the 50S subunit (bridge B1b), connecting the 2 subunits; these bridges are implicated in subunit movement. Contacts the tRNAs in the A and P-sites. The sequence is that of Small ribosomal subunit protein uS13 from Erwinia tasmaniensis (strain DSM 17950 / CFBP 7177 / CIP 109463 / NCPPB 4357 / Et1/99).